The following is a 309-amino-acid chain: Taste receptor type 2 member 105 (309 aa).

The Extracellular portion of the chain corresponds to 1–9 (MLSAAEGIL). A helical membrane pass occupies residues 10–32 (LSIATVEAGLGVLGNTFIALVNC). Residues 33-44 (MDWAKNKKLSKI) are Cytoplasmic-facing. Residues 45–67 (GFLLFGLATSRIFIVWILILDAY) form a helical membrane-spanning segment. Residues 68–86 (AKLFFPGKYLSKSLTEIIS) are Extracellular-facing. Residues 87 to 109 (CIWMTVNHMTVWFATSLSIFYFL) form a helical membrane-spanning segment. At 110–129 (KIANFSHYIFLWLKRRTDKV) the chain is on the cytoplasmic side. The chain crosses the membrane as a helical span at residues 130 to 149 (FAFLLWCLLISWAISFSFTV). Residues 150–177 (KVMKSNPKNHGNRTSGTHWEKREFTSNY) lie on the Extracellular side of the membrane. Asn-161 carries an N-linked (GlcNAc...) asparagine glycan. The helical transmembrane segment at 178–200 (VLINIGVISLLIMTLTACFLLII) threads the bilayer. At 201 to 226 (SLWKHSRQMQSNVSGFRDLNTEAHVK) the chain is on the cytoplasmic side. The helical transmembrane segment at 227–249 (AIKFLISFIILFILYFIGVAVEI) threads the bilayer. The Extracellular portion of the chain corresponds to 250–258 (ICMFIPENK). The helical transmembrane segment at 259-281 (LLFIFGLTTASVYPCCHSVILIL) threads the bilayer. The Cytoplasmic segment spans residues 282–309 (TNSQLKQAFVKVLEGLKFSENGKDLRAT).

This sequence belongs to the G-protein coupled receptor T2R family. As to expression, expressed in subsets of taste receptor cells of the tongue and palate epithelium and exclusively in gustducin-positive cells. Expressed in 15% taste bud cells in circumvallate and foliate papillae but only in 2% in fungiform papillae. Expressed in the duodenum, antrum and fundus (part of the stomach).

It localises to the membrane. In terms of biological role, gustducin-coupled cycloheximide receptor implicated in the perception of bitter compounds in the oral cavity and the gastrointestinal tract. Signals through PLCB2 and the calcium-regulated cation channel TRPM5. In Rattus norvegicus (Rat), this protein is Taste receptor type 2 member 105 (Tas2r105).